We begin with the raw amino-acid sequence, 325 residues long: 6-hydroxymellein 5-farnesyltransferase cdmH (325 aa).

Helical transmembrane passes span 60 to 80 (ASILRLAGLCTAHCVLLGAAG), 113 to 133 (AFTWMAFLYSTSVGMLKAMLG), 138 to 158 (WPFMVPLTAIILVYPLGKRPI), 169 to 189 (LLGIAVGYPTMYGWAAVYGPC), and 192 to 212 (ISEILHRCVPLWIFLFFWSFY). Asn-214 is a glycosylation site (N-linked (GlcNAc...) asparagine). 3 consecutive transmembrane segments (helical) span residues 243–263 (ALLAILASIALSTIPFVLRPF), 267–287 (WLWLSWVGAWVPGIIQQLLSF), and 295–315 (GGVLHLSTVKLGLWTVFACTL).

Belongs to the UbiA prenyltransferase family. The cofactor is Mg(2+).

It localises to the membrane. It catalyses the reaction 6-hydroxymellein + (2E,6E)-farnesyl diphosphate = verruculide C + diphosphate. The protein operates within secondary metabolite biosynthesis; terpenoid biosynthesis. Its function is as follows. 6-hydroxymellein 5-farnesyltransferase; part of the gene cluster that mediates the biosynthesis of chrodrimanin B, a meroterpenoid that acts as a potent blocker of insect GABA-gated chloride channels. The first step of the pathway is the biosynthesis of 6-hydroxymellein by the polyketide synthase cdmE. The prenyltransferase cdmH acts as a 6-hydroxymellein 5-farnesyltransferase and produces the hydrophobic metabolite verruculide C. The FAD-dependent monooxygenase cdmI further converts verruculide C into verruculide B. The terpene cyclase cdmG then produced the pentacyclic molecule 3-hydroxypentacecilide A, the backbone structure of chrodrimanin B, via folding the farnesyl moiety of the substrate into the chair-boat conformation. The short-chain dehydrogenase/reductase cdmF functions as the 3-OH dehydrogenase that oxidizes the C-3 hydroxyl group of 3-hydroxypentacecilide A and produces chrodrimanin C, the dehydrogenated product of 3-hydroxypentacecilide A. The cytochrome P450 monooxygenase cdmJ then accepts both 3-hydroxypentacecilide A and chrodrimanin C and functions as a C-7-beta-hydroxylase to produce respectively chrodrimanin H and chrodrimanin F. The dioxygenase cdmA accepts chrodrimanin H to afford chrodrimanin E, which is further transformed to chrodrimanin A by the dioxygenase cdmD. CdmA can also accept chrodrimanin C as substrate to convert it into verruculide A, which is further converted into chrodrimanin T by cdmD. The last step of the biosynthesis is proposed to be performed by the acetyltransferase cdmC which acetylates chrodrimanin A to yield chrodrimanin B. The pathway may also lead to the production of additional shunt products, including chrodrimanins T and U. The sequence is that of 6-hydroxymellein 5-farnesyltransferase cdmH from Talaromyces verruculosus (Penicillium verruculosum).